A 544-amino-acid chain; its full sequence is Sialidase (544 aa).

The signal sequence occupies residues Met-1–Ala-22. BNR repeat units lie at residues Ser-239–Lys-250, Ala-318–Ala-329, and Met-378–Met-389. Glu-399 is a catalytic residue. Residue Arg-415 coordinates substrate. Residues Ala-425–Glu-436 form a BNR 4 repeat. Arg-479 is a binding site for substrate. One copy of the BNR 5 repeat lies at Lys-485–Pro-496.

This sequence belongs to the glycosyl hydrolase 33 family.

It is found in the periplasm. It carries out the reaction Hydrolysis of alpha-(2-&gt;3)-, alpha-(2-&gt;6)-, alpha-(2-&gt;8)- glycosidic linkages of terminal sialic acid residues in oligosaccharides, glycoproteins, glycolipids, colominic acid and synthetic substrates.. Its function is as follows. Sialidases have been suggested to be pathogenic factors in microbial infections. This Bacteroides fragilis (strain YCH46) protein is Sialidase (nanH).